A 321-amino-acid chain; its full sequence is Phospho-N-acetylmuramoyl-pentapeptide-transferase (321 aa).

10 consecutive transmembrane segments (helical) span residues 1–21 (MIFV…PVLI), 50–70 (MGGL…IIFV), 76–96 (IILL…DDYI), 112–132 (FLAQ…FHLV), 140–160 (IPFT…IVFL), 176–196 (GLAT…SFVL), 200–220 (AIGI…PYNI), 225–245 (VFMG…ISIM), 250–270 (LSLI…MLQV), and 300–320 (VVTV…WIGV).

This sequence belongs to the glycosyltransferase 4 family. MraY subfamily. Mg(2+) is required as a cofactor.

It localises to the cell membrane. The catalysed reaction is UDP-N-acetyl-alpha-D-muramoyl-L-alanyl-gamma-D-glutamyl-L-lysyl-D-alanyl-D-alanine + di-trans,octa-cis-undecaprenyl phosphate = Mur2Ac(oyl-L-Ala-gamma-D-Glu-L-Lys-D-Ala-D-Ala)-di-trans,octa-cis-undecaprenyl diphosphate + UMP. It participates in cell wall biogenesis; peptidoglycan biosynthesis. In terms of biological role, catalyzes the initial step of the lipid cycle reactions in the biosynthesis of the cell wall peptidoglycan: transfers peptidoglycan precursor phospho-MurNAc-pentapeptide from UDP-MurNAc-pentapeptide onto the lipid carrier undecaprenyl phosphate, yielding undecaprenyl-pyrophosphoryl-MurNAc-pentapeptide, known as lipid I. This Staphylococcus aureus (strain bovine RF122 / ET3-1) protein is Phospho-N-acetylmuramoyl-pentapeptide-transferase.